Reading from the N-terminus, the 312-residue chain is Ribonuclease HIII (312 aa).

An RNase H type-2 domain is found at phenylalanine 95–proline 311. Residues aspartate 101, glutamate 102, and aspartate 206 each coordinate a divalent metal cation.

It belongs to the RNase HII family. RnhC subfamily. Mn(2+) serves as cofactor. It depends on Mg(2+) as a cofactor.

It localises to the cytoplasm. The enzyme catalyses Endonucleolytic cleavage to 5'-phosphomonoester.. Endonuclease that specifically degrades the RNA of RNA-DNA hybrids. In Staphylococcus aureus (strain USA300), this protein is Ribonuclease HIII.